A 756-amino-acid polypeptide reads, in one-letter code: 3-O-alpha-D-glucosyl-L-rhamnose phosphorylase (756 aa).

358–359 (WD) is a substrate binding site. The active-site Proton donor is the Glu-486. Residue 590–591 (KQ) coordinates substrate.

This sequence belongs to the glycosyl hydrolase 65 family. Monomer.

Its subcellular location is the cytoplasm. It carries out the reaction 3-O-alpha-D-glucosyl-L-rhamnose + phosphate = beta-D-glucose 1-phosphate + L-rhamnopyranose. In terms of biological role, phosphorylase showing strict alpha-1,3-regioselectivity and producing 3-O-alpha-D-glucopyranosyl-L-rhamnopyranose. Specific for L-rhamnose as acceptor and beta-D-glucose 1-phosphate as donor. Does not phosphorylate alpha,alpha-trehalose, kojibiose, nigerose, or maltose. The protein is 3-O-alpha-D-glucosyl-L-rhamnose phosphorylase of Lachnoclostridium phytofermentans (strain ATCC 700394 / DSM 18823 / ISDg) (Clostridium phytofermentans).